An 888-amino-acid chain; its full sequence is Pyruvate dehydrogenase E1 component (888 aa).

In terms of assembly, homodimer. Part of the PDH complex, consisting of multiple copies of pyruvate dehydrogenase (E1), dihydrolipoamide acetyltransferase (E2) and lipoamide dehydrogenase (E3). It depends on thiamine diphosphate as a cofactor.

The enzyme catalyses N(6)-[(R)-lipoyl]-L-lysyl-[protein] + pyruvate + H(+) = N(6)-[(R)-S(8)-acetyldihydrolipoyl]-L-lysyl-[protein] + CO2. Component of the pyruvate dehydrogenase (PDH) complex, that catalyzes the overall conversion of pyruvate to acetyl-CoA and CO(2). The polypeptide is Pyruvate dehydrogenase E1 component (aceE) (Buchnera aphidicola subsp. Schizaphis graminum (strain Sg)).